The following is a 439-amino-acid chain: Cell division protein DivIB (439 aa).

2 disordered regions span residues 1–96 and 119–149; these read MDDK…DSNI and DNEQ…KSKV. Topologically, residues 1–173 are cytoplasmic; it reads MDDKTKNDQQ…RRKRQKRIQY (173 aa). Over residues 11-20 the composition is skewed to acidic residues; it reads ESNEDKDELE. A compositionally biased stretch (basic residues) spans 26–38; the sequence is TSKKRRQRKRSKA. The span at 64–76 shows a compositional bias: basic and acidic residues; sequence KDFKKEESNDKNN. Over residues 77 to 86 the composition is skewed to low complexity; sequence DSASSHANDN. The span at 87 to 96 shows a compositional bias: acidic residues; that stretch reads NIDDSTDSNI. Residues 119-133 are compositionally biased toward polar residues; sequence DNEQPQSAPKEQNSD. The helical transmembrane segment at 174–194 threads the bilayer; that stretch reads SVITILVLLIAVILIYMFSPL. In terms of domain architecture, POTRA spans 195 to 263; the sequence is SKIAHVNING…NTLNVDITEN (69 aa). Residues 195–439 are Extracellular-facing; sequence SKIAHVNING…KINKQSSKNN (245 aa). A disordered region spans residues 396 to 439; sequence YRGNTSSQSESDKNVTKSSQEENQAKEELQSVLNKINKQSSKNN. Positions 405–424 are enriched in basic and acidic residues; that stretch reads ESDKNVTKSSQEENQAKEEL. The segment covering 426-439 has biased composition (polar residues); that stretch reads SVLNKINKQSSKNN.

This sequence belongs to the FtsQ/DivIB family. DivIB subfamily.

It is found in the cell membrane. Its function is as follows. Cell division protein that may be involved in stabilizing or promoting the assembly of the division complex. The protein is Cell division protein DivIB of Staphylococcus aureus (strain NCTC 8325 / PS 47).